Consider the following 413-residue polypeptide: Glutamate-1-semialdehyde 2,1-aminomutase (413 aa).

Lys260 carries the post-translational modification N6-(pyridoxal phosphate)lysine.

This sequence belongs to the class-III pyridoxal-phosphate-dependent aminotransferase family. HemL subfamily. Pyridoxal 5'-phosphate is required as a cofactor.

The protein resides in the cytoplasm. It catalyses the reaction (S)-4-amino-5-oxopentanoate = 5-aminolevulinate. It functions in the pathway porphyrin-containing compound metabolism; protoporphyrin-IX biosynthesis; 5-aminolevulinate from L-glutamyl-tRNA(Glu): step 2/2. The polypeptide is Glutamate-1-semialdehyde 2,1-aminomutase (Methanoregula boonei (strain DSM 21154 / JCM 14090 / 6A8)).